The primary structure comprises 98 residues: DNA-binding protein Fis (98 aa).

Residues 74 to 93 (QTRAATMLGINRGTLRKKLK) constitute a DNA-binding region (H-T-H motif).

It belongs to the transcriptional regulatory Fis family. Homodimer.

Activates ribosomal RNA transcription. Plays a direct role in upstream activation of rRNA promoters. This is DNA-binding protein Fis from Mannheimia haemolytica (Pasteurella haemolytica).